The sequence spans 436 residues: Histidinol dehydrogenase (436 aa).

Y136, Q198, and N221 together coordinate NAD(+). Residues S244, Q266, and H269 each contribute to the substrate site. Positions 266 and 269 each coordinate Zn(2+). Active-site proton acceptor residues include E334 and H335. Residues H335, D368, E422, and H427 each contribute to the substrate site. D368 contacts Zn(2+). A Zn(2+)-binding site is contributed by H427.

This sequence belongs to the histidinol dehydrogenase family. Zn(2+) is required as a cofactor.

It catalyses the reaction L-histidinol + 2 NAD(+) + H2O = L-histidine + 2 NADH + 3 H(+). The protein operates within amino-acid biosynthesis; L-histidine biosynthesis; L-histidine from 5-phospho-alpha-D-ribose 1-diphosphate: step 9/9. Its function is as follows. Catalyzes the sequential NAD-dependent oxidations of L-histidinol to L-histidinaldehyde and then to L-histidine. This is Histidinol dehydrogenase from Dehalococcoides mccartyi (strain CBDB1).